We begin with the raw amino-acid sequence, 463 residues long: Argininosuccinate lyase (463 aa).

The protein belongs to the lyase 1 family. Argininosuccinate lyase subfamily.

Its subcellular location is the cytoplasm. The catalysed reaction is 2-(N(omega)-L-arginino)succinate = fumarate + L-arginine. It functions in the pathway amino-acid biosynthesis; L-arginine biosynthesis; L-arginine from L-ornithine and carbamoyl phosphate: step 3/3. The chain is Argininosuccinate lyase from Prochlorococcus marinus (strain NATL1A).